The chain runs to 300 residues: MSAIKEIPVNLPKLLTLFKTIVPKLTNDKYKGQYGRIGVIGGSLEYTGAPFFAAISSMKVGADLSHVFCQANAAPVIKSYSPDLIVHPVLDCLDAVDKIQPWLERLHVIVIGPGLGREPLILQTVTNVLKLCTKLQKPIVIDADGLFILNDNIDLVSGQRNIILTPNAMEFRRLFGEDVNDVRQKMSCLGDGVVVLEKGVNDKIHIPHTNEVYSMPTGGSGRRCGGQGDLLSGSLATFFYWSLQSNQPNPAYIAACASSYLVKRANSTAFKKFGRSLLASDMINEISAVFRSDFEDAETG.

Residues 14–293 (LLTLFKTIVP…NEISAVFRSD (280 aa)) form the YjeF C-terminal domain. (6S)-NADPHX contacts are provided by residues G114 and 167–173 (NAMEFRR). ATP contacts are provided by residues 198-202 (KGVND) and 219-228 (GSGRRCGGQG). A (6S)-NADPHX-binding site is contributed by D229.

It belongs to the NnrD/CARKD family. Mg(2+) is required as a cofactor.

The catalysed reaction is (6S)-NADHX + ATP = ADP + phosphate + NADH + H(+). It catalyses the reaction (6S)-NADPHX + ATP = ADP + phosphate + NADPH + H(+). In terms of biological role, catalyzes the dehydration of the S-form of NAD(P)HX at the expense of ATP, which is converted to ADP. Together with NAD(P)HX epimerase, which catalyzes the epimerization of the S- and R-forms, the enzyme allows the repair of both epimers of NAD(P)HX, a damaged form of NAD(P)H that is a result of enzymatic or heat-dependent hydration. This chain is ATP-dependent (S)-NAD(P)H-hydrate dehydratase, found in Drosophila pseudoobscura pseudoobscura (Fruit fly).